A 369-amino-acid chain; its full sequence is Tetraacyldisaccharide 4'-kinase (369 aa).

68–75 (VVGGTGKT) lines the ATP pocket.

This sequence belongs to the LpxK family.

It carries out the reaction a lipid A disaccharide + ATP = a lipid IVA + ADP + H(+). Its pathway is glycolipid biosynthesis; lipid IV(A) biosynthesis; lipid IV(A) from (3R)-3-hydroxytetradecanoyl-[acyl-carrier-protein] and UDP-N-acetyl-alpha-D-glucosamine: step 6/6. Transfers the gamma-phosphate of ATP to the 4'-position of a tetraacyldisaccharide 1-phosphate intermediate (termed DS-1-P) to form tetraacyldisaccharide 1,4'-bis-phosphate (lipid IVA). This is Tetraacyldisaccharide 4'-kinase from Chlamydia muridarum (strain MoPn / Nigg).